Here is a 262-residue protein sequence, read N- to C-terminus: Glycoprotein gp2 (262 aa).

Residues R1–Q45 form a disordered region.

It is found in the virion membrane. Functionally, virulence factor. This Equus caballus (Horse) protein is Glycoprotein gp2.